Reading from the N-terminus, the 131-residue chain is Global transcriptional regulator Spx 2 (131 aa).

A disulfide bridge links Cys-10 with Cys-13.

This sequence belongs to the ArsC family. Spx subfamily. As to quaternary structure, interacts with the C-terminal domain of the alpha subunit of the RNAP.

It is found in the cytoplasm. In terms of biological role, global transcriptional regulator that plays a key role in stress response and exerts either positive or negative regulation of genes. Acts by interacting with the C-terminal domain of the alpha subunit of the RNA polymerase (RNAP). This interaction can enhance binding of RNAP to the promoter region of target genes and stimulate their transcription, or block interaction of RNAP with activator. In Bacillus anthracis, this protein is Global transcriptional regulator Spx 2.